Here is a 78-residue protein sequence, read N- to C-terminus: Large ribosomal subunit protein bL28 (78 aa).

Residues 1–20 are disordered; that stretch reads MSRVCQVTGKGPVTGNNISH.

The protein belongs to the bacterial ribosomal protein bL28 family.

This chain is Large ribosomal subunit protein bL28, found in Pseudomonas putida (strain ATCC 700007 / DSM 6899 / JCM 31910 / BCRC 17059 / LMG 24140 / F1).